Reading from the N-terminus, the 343-residue chain is Phosphatidylglycerol--prolipoprotein diacylglyceryl transferase (343 aa).

4 helical membrane-spanning segments follow: residues 22-42, 54-74, 97-117, and 123-143; these read IPIRAYALCIIAGIVAALIIG, GVIYDIALWAVPFGLVGGRLY, VWEGGLGIWGAVALGGVGAWI, and GIPLPAFADAIAPGIVLAQAI. R145 is a binding site for a 1,2-diacyl-sn-glycero-3-phospho-(1'-sn-glycerol). Helical transmembrane passes span 193 to 213 and 257 to 277; these read VVHPTFLYELLWNVLVFVLLI and VNSFTSTLVFVGAVAYILLAP. The tract at residues 283-343 is disordered; that stretch reads PATLGGTPSS…SADNSGIVEK (61 aa). Positions 295 to 325 are enriched in acidic residues; that stretch reads GGDDTAETEATADTEDTEDTEDGVTDAPEAD.

The protein belongs to the Lgt family.

The protein localises to the cell membrane. It carries out the reaction L-cysteinyl-[prolipoprotein] + a 1,2-diacyl-sn-glycero-3-phospho-(1'-sn-glycerol) = an S-1,2-diacyl-sn-glyceryl-L-cysteinyl-[prolipoprotein] + sn-glycerol 1-phosphate + H(+). It participates in protein modification; lipoprotein biosynthesis (diacylglyceryl transfer). Catalyzes the transfer of the diacylglyceryl group from phosphatidylglycerol to the sulfhydryl group of the N-terminal cysteine of a prolipoprotein, the first step in the formation of mature lipoproteins. This is Phosphatidylglycerol--prolipoprotein diacylglyceryl transferase from Mycobacteroides abscessus (strain ATCC 19977 / DSM 44196 / CCUG 20993 / CIP 104536 / JCM 13569 / NCTC 13031 / TMC 1543 / L948) (Mycobacterium abscessus).